The sequence spans 229 residues: AA9 family lytic polysaccharide monooxygenase E (229 aa).

An N-terminal signal peptide occupies residues 1–19 (MRSSDITFVLLSVVATVRS). His20 contributes to the Cu(2+) binding site. Cys57 and Cys178 are oxidised to a cystine. An N-linked (GlcNAc...) asparagine glycan is attached at Asn76. Position 99 (His99) interacts with Cu(2+). O2 contacts are provided by His164 and Gln173. Position 175 (Tyr175) interacts with Cu(2+). N-linked (GlcNAc...) asparagine glycosylation is present at Asn217.

Belongs to the polysaccharide monooxygenase AA9 family. The cofactor is Cu(2+).

The protein localises to the secreted. It catalyses the reaction [(1-&gt;4)-beta-D-glucosyl]n+m + reduced acceptor + O2 = 4-dehydro-beta-D-glucosyl-[(1-&gt;4)-beta-D-glucosyl]n-1 + [(1-&gt;4)-beta-D-glucosyl]m + acceptor + H2O.. Lytic polysaccharide monooxygenase (LPMO) that depolymerizes crystalline and amorphous polysaccharides via the oxidation of scissile alpha- or beta-(1-4)-glycosidic bonds, yielding C1 and C4 oxidation products. Catalysis by LPMOs requires the reduction of the active-site copper from Cu(II) to Cu(I) by a reducing agent and H(2)O(2) or O(2) as a cosubstrate. This Botryotinia fuckeliana (strain B05.10) (Noble rot fungus) protein is AA9 family lytic polysaccharide monooxygenase E.